The primary structure comprises 581 residues: Adenine deaminase (581 aa).

This sequence belongs to the metallo-dependent hydrolases superfamily. Adenine deaminase family. It depends on Mn(2+) as a cofactor.

It carries out the reaction adenine + H2O + H(+) = hypoxanthine + NH4(+). This Brucella abortus (strain 2308) protein is Adenine deaminase.